The chain runs to 281 residues: Aliphatic sulfonates import ATP-binding protein SsuB (281 aa).

In terms of domain architecture, ABC transporter spans 40–263; that stretch reads LDIRGLRKSF…QRGSAELAAL (224 aa). 72–79 serves as a coordination point for ATP; sequence GRSGCGKS.

This sequence belongs to the ABC transporter superfamily. Aliphatic sulfonates importer (TC 3.A.1.17.2) family. In terms of assembly, the complex is composed of two ATP-binding proteins (SsuB), two transmembrane proteins (SsuC) and a solute-binding protein (SsuA).

Its subcellular location is the cell inner membrane. It catalyses the reaction ATP + H2O + aliphatic sulfonate-[sulfonate-binding protein]Side 1 = ADP + phosphate + aliphatic sulfonateSide 2 + [sulfonate-binding protein]Side 1.. Part of the ABC transporter complex SsuABC involved in aliphatic sulfonates import. Responsible for energy coupling to the transport system. This is Aliphatic sulfonates import ATP-binding protein SsuB from Rhodopseudomonas palustris (strain ATCC BAA-98 / CGA009).